Here is an 87-residue protein sequence, read N- to C-terminus: Small ribosomal subunit protein bS20 (87 aa).

Residues 1 to 22 (MANSAQARKRARQSVKQRAHNA) are disordered. Residues 7–19 (ARKRARQSVKQRA) show a composition bias toward basic residues.

It belongs to the bacterial ribosomal protein bS20 family.

In terms of biological role, binds directly to 16S ribosomal RNA. This is Small ribosomal subunit protein bS20 from Neisseria gonorrhoeae (strain ATCC 700825 / FA 1090).